The following is a 252-amino-acid chain: Phosphoribosyl-ATP pyrophosphatase (252 aa).

The protein belongs to the PRA-PH family.

The protein localises to the cytoplasm. It carries out the reaction 1-(5-phospho-beta-D-ribosyl)-ATP + H2O = 1-(5-phospho-beta-D-ribosyl)-5'-AMP + diphosphate + H(+). It functions in the pathway amino-acid biosynthesis; L-histidine biosynthesis; L-histidine from 5-phospho-alpha-D-ribose 1-diphosphate: step 2/9. The chain is Phosphoribosyl-ATP pyrophosphatase from Magnetococcus marinus (strain ATCC BAA-1437 / JCM 17883 / MC-1).